The chain runs to 440 residues: Chromosomal replication initiator protein DnaA (440 aa).

The segment at 1 to 74 (MNPSQILENL…VQSGNKAIIN (74 aa)) is domain I, interacts with DnaA modulators. Residues 74-99 (NIQAQSTKQSNKSTKIDIAHIQAQST) are domain II. The tract at residues 100–316 (ILNPSFTFES…GIIISLNAYA (217 aa)) is domain III, AAA+ region. Residues G146, G148, K149, and T150 each contribute to the ATP site. The interval 317–440 (TILGQEITLE…KNKILIKSQS (124 aa)) is domain IV, binds dsDNA.

The protein belongs to the DnaA family. As to quaternary structure, oligomerizes as a right-handed, spiral filament on DNA at oriC.

It is found in the cytoplasm. Functionally, plays an essential role in the initiation and regulation of chromosomal replication. ATP-DnaA binds to the origin of replication (oriC) to initiate formation of the DNA replication initiation complex once per cell cycle. Binds the DnaA box (a 9 base pair repeat at the origin) and separates the double-stranded (ds)DNA. Forms a right-handed helical filament on oriC DNA; dsDNA binds to the exterior of the filament while single-stranded (ss)DNA is stabiized in the filament's interior. The ATP-DnaA-oriC complex binds and stabilizes one strand of the AT-rich DNA unwinding element (DUE), permitting loading of DNA polymerase. After initiation quickly degrades to an ADP-DnaA complex that is not apt for DNA replication. Binds acidic phospholipids. This Campylobacter jejuni subsp. doylei (strain ATCC BAA-1458 / RM4099 / 269.97) protein is Chromosomal replication initiator protein DnaA.